The following is a 621-amino-acid chain: Glutamine--fructose-6-phosphate aminotransferase [isomerizing] (621 aa).

C2 functions as the Nucleophile; for GATase activity in the catalytic mechanism. One can recognise a Glutamine amidotransferase type-2 domain in the interval 2-223 (CGIIGYVGEG…DRELGIISIS (222 aa)). SIS domains lie at 289 to 436 (LHLE…HKFT) and 470 to 611 (LSKQ…IDKP). K616 (for Fru-6P isomerization activity) is an active-site residue.

As to quaternary structure, homodimer.

The protein resides in the plastid. The protein localises to the chloroplast. It carries out the reaction D-fructose 6-phosphate + L-glutamine = D-glucosamine 6-phosphate + L-glutamate. Functionally, catalyzes the first step in hexosamine metabolism, converting fructose-6P into glucosamine-6P using glutamine as a nitrogen source. This is Glutamine--fructose-6-phosphate aminotransferase [isomerizing] from Cyanidium caldarium (Red alga).